Reading from the N-terminus, the 371-residue chain is Peptidyl-prolyl cis-trans isomerase CPR6 (371 aa).

In terms of domain architecture, PPIase cyclophilin-type spans 7-174 (FFDISIGGKP…RDVKIDDCGV (168 aa)). TPR repeat units follow at residues 219 to 252 (IETV…LKEY), 270 to 303 (VSIP…EAAD), and 308 to 341 (AKAL…QPND).

This sequence belongs to the cyclophilin-type PPIase family. PPIase D subfamily. In terms of assembly, interacts with RPD3.

Its subcellular location is the cytoplasm. It carries out the reaction [protein]-peptidylproline (omega=180) = [protein]-peptidylproline (omega=0). Functionally, PPIases accelerate the folding of proteins. It catalyzes the cis-trans isomerization of proline imidic peptide bonds in oligopeptides. This chain is Peptidyl-prolyl cis-trans isomerase CPR6 (CPR6), found in Saccharomyces cerevisiae (strain ATCC 204508 / S288c) (Baker's yeast).